Reading from the N-terminus, the 220-residue chain is Nucleoside diphosphate kinase, mitochondrial (220 aa).

The N-terminal 57 residues, 1 to 57 (MFSRFARAFPKILASGASQRTFATVQKAFANPTSKKLIVGSSLLIGSAFATTSFVAC), are a transit peptide targeting the mitochondrion. The ATP site is built by lysine 80, phenylalanine 128, arginine 156, threonine 162, arginine 173, and asparagine 183. The active-site Pros-phosphohistidine intermediate is histidine 186.

The protein belongs to the NDK family. The cofactor is Mg(2+).

It localises to the mitochondrion intermembrane space. The catalysed reaction is a 2'-deoxyribonucleoside 5'-diphosphate + ATP = a 2'-deoxyribonucleoside 5'-triphosphate + ADP. It carries out the reaction a ribonucleoside 5'-diphosphate + ATP = a ribonucleoside 5'-triphosphate + ADP. Major role in the synthesis of nucleoside triphosphates other than ATP. The ATP gamma phosphate is transferred to the NDP beta phosphate via a ping-pong mechanism, using a phosphorylated active-site intermediate. The sequence is that of Nucleoside diphosphate kinase, mitochondrial (ndkM) from Dictyostelium discoideum (Social amoeba).